We begin with the raw amino-acid sequence, 282 residues long: MSPKTVFSTDTHREPIPPQPHPSGARPPQLPRELIPRHVAIVMDGNGRWAKQRGLPRTEGHKAGESSLFDVIEGALELGVPYLSAYAFSTENWKRSPDEVRFLMGFNRDVIRRRRDELHARGVRVRWAGRPGRLWKSVIKELTEAEELTKHNTKLTLQFCVNYGGRAEIADAAAALARDVAAGRLSPNRVTEATLARYLYHPDIPDVDLFIRSSGEQRLSNFLLWQSSYAEFVFLDTLWPDFDRRHFWQACEIYARRDRRYGGAEPNPVGPPQSAAGAQGQD.

Residues M1–L30 are disordered. The active site involves D44. D44 contacts Mg(2+). Substrate-binding positions include G45–R48, W49, R57, H61, and S89–E91. N92 (proton acceptor) is an active-site residue. Substrate-binding positions include W93, R95, R212, and R218–S220. Position 231 (E231) interacts with Mg(2+). The segment at G262 to D282 is disordered.

Belongs to the UPP synthase family. In terms of assembly, homodimer. Requires Mg(2+) as cofactor.

It carries out the reaction (2Z,6E)-farnesyl diphosphate + 10 isopentenyl diphosphate = di-trans,deca-cis-tridecaprenyl diphosphate + 10 diphosphate. The catalysed reaction is (2Z,6E)-farnesyl diphosphate + 11 isopentenyl diphosphate = di-trans,undeca-cis-tetradecaprenyl diphosphate + 11 diphosphate. The enzyme catalyses (2Z,6E)-farnesyl diphosphate + 9 isopentenyl diphosphate = di-trans,nona-cis-dodecaprenyl diphosphate + 9 diphosphate. In terms of biological role, catalyzes the synthesis of Z,E-mixed prenyl diphosphates by a condensation of isopentenyl diphosphate to an allylic diphosphate. It shows a large substrate specificity accepting dimethylallyl diphosphate (DMAPP), GPP, E,Efarnesyl diphosphate (FPP), E,E,E-geranylgeranyl diphosphate (GGPP), neryl diphosphate (Z-GPP), and (2Z,6E)-farnesyl diphosphate (Z,E-FPP) as allylic substrates. The enzyme exhibits the highest activity when Z,E-FPP is employed as an allylic substrate. The major product is dodecaprenyl diphosphate (C60) under every allylic substrate conditions, but the enzyme is also able to synthesize even C70 prenyl diphosphate as the maximum chain-length product. The protein is Trans,polycis-polyprenyl diphosphate synthase ((2Z,6E)-farnesyl diphosphate specific) of Thermobifida fusca (strain YX).